We begin with the raw amino-acid sequence, 170 residues long: Large ribosomal subunit protein uL10 (170 aa).

It belongs to the universal ribosomal protein uL10 family. Part of the ribosomal stalk of the 50S ribosomal subunit. The N-terminus interacts with L11 and the large rRNA to form the base of the stalk. The C-terminus forms an elongated spine to which L12 dimers bind in a sequential fashion forming a multimeric L10(L12)X complex.

In terms of biological role, forms part of the ribosomal stalk, playing a central role in the interaction of the ribosome with GTP-bound translation factors. The protein is Large ribosomal subunit protein uL10 of Nitratiruptor sp. (strain SB155-2).